Reading from the N-terminus, the 146-residue chain is uncharacterized protein (146 aa).

This is an uncharacterized protein from Bacillus subtilis (strain 168).